A 158-amino-acid polypeptide reads, in one-letter code: C-type lectin mannose-binding isoform (158 aa).

A signal peptide spans 1–20 (MGRFLLVTLSMLVVTFSLNE). Intrachain disulfides connect C26-C37, C54-C154, and C129-C146. The 123-residue stretch at 33-155 (KNGFCYKVFN…CEALYHFICQ (123 aa)) folds into the C-type lectin domain. The short motif at 119–121 (EPN) is the Mannose-binding element. N-linked (GlcNAc...) asparagine glycosylation is present at N121. Positions 127, 142, and 143 each coordinate Ca(2+).

This sequence belongs to the true venom lectin family. As to quaternary structure, homodimer; disulfide-linked. Expressed by the venom gland.

Its subcellular location is the secreted. In terms of biological role, mannose-binding lectin that binds to and agglutinates erythrocytes in a calcium-dependent manner. This chain is C-type lectin mannose-binding isoform, found in Notechis scutatus scutatus (Mainland tiger snake).